The sequence spans 482 residues: Histone deacetylase 1 (482 aa).

The histone deacetylase stretch occupies residues 9-321; sequence RKVCYYYDGD…WTYETAVALD (313 aa). Residues Gly-27 and Lys-31 each contribute to the 1D-myo-inositol 1,4,5,6-tetrakisphosphate site. Lys-74 carries the N6-acetyllysine; alternate modification. Lys-74 participates in a covalent cross-link: Glycyl lysine isopeptide (Lys-Gly) (interchain with G-Cter in SUMO2); alternate. The active site involves His-141. Residues Asp-176 and His-178 each contribute to the Zn(2+) site. Residue Lys-220 is modified to N6-acetyllysine. Residue Cys-261 is modified to S-nitrosocysteine. Residue Asp-264 participates in Zn(2+) binding. Arg-270 contributes to the 1D-myo-inositol 1,4,5,6-tetrakisphosphate binding site. Cys-273 is subject to S-nitrosocysteine. A compositionally biased stretch (acidic residues) spans 390–400; the sequence is PEESGDEDEDD. The tract at residues 390–482 is disordered; it reads PEESGDEDED…KGVKEEVKLA (93 aa). Ser-393, Ser-406, and Ser-409 each carry phosphoserine. Over residues 401-416 the composition is skewed to basic and acidic residues; that stretch reads PDKRISICSSDKRIAC. A compositionally biased stretch (acidic residues) spans 417-427; sequence EEEFSDSEEEG. 2 positions are modified to phosphoserine; by CK2: Ser-421 and Ser-423. Lys-432 is subject to N6-methylated lysine; by EHMT2. Residue Lys-438 forms a Glycyl lysine isopeptide (Lys-Gly) (interchain with G-Cter in SUMO2) linkage. Over residues 443–482 the composition is skewed to basic and acidic residues; the sequence is VKTEDEKEKDPEEKKEVTEEEKTKEEKPEAKGVKEEVKLA. A Glycyl lysine isopeptide (Lys-Gly) (interchain with G-Cter in SUMO2); alternate cross-link involves residue Lys-444. Residue Lys-444 forms a Glycyl lysine isopeptide (Lys-Gly) (interchain with G-Cter in SUMO); alternate linkage. Residues Lys-456, Lys-457, and Lys-473 each participate in a glycyl lysine isopeptide (Lys-Gly) (interchain with G-Cter in SUMO2) cross-link. A Glycyl lysine isopeptide (Lys-Gly) (interchain with G-Cter in SUMO2); alternate cross-link involves residue Lys-476. Lys-476 participates in a covalent cross-link: Glycyl lysine isopeptide (Lys-Gly) (interchain with G-Cter in SUMO); alternate. Residue Lys-480 forms a Glycyl lysine isopeptide (Lys-Gly) (interchain with G-Cter in SUMO2) linkage.

It belongs to the histone deacetylase family. HD type 1 subfamily. Part of the core histone deacetylase (HDAC) complex composed of HDAC1, HDAC2, RBBP4 and RBBP7, the core complex associates with SIN3, SAP18 and SAP30 to form the SIN3 HDAC complex. Component of the nucleosome remodeling and deacetylase (NuRD) repressor complex, composed of core proteins MTA1, MTA2, MTA3, RBBP4, RBBP7, HDAC1, HDAC2, MBD2, MBD3, and peripherally associated proteins CDK2AP1, CDK2AP2, GATAD2A, GATAD2B, CHD3, CHD4 and CHD5. The exact stoichiometry of the NuRD complex is unknown, and some subunits such as MBD2 and MBD3, GATAD2A and GATAD2B, and CHD3, CHD4 and CHD5 define mutually exclusive NuRD complexes. Component of a BHC histone deacetylase complex that contains HDAC1, HDAC2, HMG20B/BRAF35, KDM1A, RCOR1/CoREST and PHF21A/BHC80. The BHC complex may also contain ZMYM2, ZNF217, ZMYM3, GSE1 and GTF2I. Component of a mSin3A corepressor complex that contains SIN3A, SAP130, SUDS3/SAP45, ARID4B/SAP180, HDAC1 and HDAC2. Component of the SIN3B complex, which includes SIN3B, HDAC1, PHF12 and MORF4L1. Found in a trimeric complex with APBB1 and TSHZ3; the interaction between HDAC1 and APBB1 is mediated by TSHZ3. Forms a complex comprising APPL1, RUVBL2, APPL2, CTNNB1 and HDAC2. Component of a RCOR/GFI/KDM1A/HDAC complex. Part of a complex composed of TRIM28, HDAC1, HDAC2 and EHMT2. Part of a complex containing at least CDYL, MIER1, MIER2, HDAC1 and HDAC2. The large PER complex involved in the histone deacetylation is composed of at least HDAC1, PER2, SFPQ and SIN3A. Associates with the 9-1-1 complex; interacts with HUS1. Found in a complex with DNMT3A and HDAC7. Found in a complex with YY1, SIN3A and GON4L. Identified in a histone deacetylase complex that contains DNTTIP1, HDAC1 and MIDEAS; this complex assembles into a tetramer that contains four copies of each protein chain. Found in a complex composed of at least SINHCAF, SIN3A, HDAC1, SAP30, RBBP4, OGT and TET1. Interacts with GFI1; the interaction is direct. Interacts directly with GFI1B. Interacts with TSHZ3 (via N-terminus); the interaction is direct. Interacts with APEX1; the interaction is not dependent on the acetylated status of APEX1. Interacts with BANP. Interacts with BAZ2A/TIP5. Interacts with BCL6. Interacts with BCOR. Interacts with BHLHE40/DEC1. Interacts with BRCC3; this interaction is enhanced in the presence of PWWP2B. Interacts with BRMS1. Interacts with BRMS1L. Interacts with C10orf90/FATS (via its N-terminal); the interaction prevents binding of HDAC1 to CDKN1A/p21 and facilitates the acetylation and stabilization of CDKN1A/p21. Interacts with CBFA2T3. Interacts with CCAR2. Interacts with CDK2AP1. Interacts with CHD3. Interacts with CHD4. Interacts with CHFR. Interacts with CIART. Interacts with CDKN1A/p21. Interacts with CDK5 complexed to CDK5R1 (p25). Interacts with CRY1. Interacts with DAXX. Interacts with DDIT3/CHOP. Interacts with DDX5. Interacts with DHX36; this interaction occurs in a RNA-dependent manner. Interacts with DNMT1. Interacts with DNTTIP1. Interacts with E4F1. Interacts with EP300. Interacts with ERCC6. Interacts with GATAD2A. Interacts with HCFC1. Interacts with HDAC9. Interacts with HUS1. Interacts with INSM1. Interacts with KDM4A. Interacts with KDM5A; this interaction impairs histone deacetylation. Interacts with KDM5B. Interacts with KLF1. Interacts with MBD3L2. Interacts with MIER1. Interacts with NFE4. Interacts with NR4A2/NURR1. Interacts with NR1D2 (via C-terminus). Interacts with NRIP1. Interacts with NSD2. Interacts with PACS2. Interacts with PHB2. Interacts with PPHLN1. Interacts with PRDM6. Interacts with PRDM16. Interacts with PWWP2A in a MTA1-dependent manner. Interacts with PWWP2B. Interacts with RB1. Interacts with RERE. Interacts with SANBR (via the BTB domain). Interacts with SAMSN1. Interacts with SAP30L. Interacts with SETDB1. Interacts with SIN3A. Interacts with SMAD3. Interacts with SMAD4; positively regulated by ZBTB7A. Interacts with SMARCAD1. Interacts with SMARCA4/BRG1. Interacts with SMYD2. Interacts with SMYD4 (via MYND-type zinc finger). Interacts with SP1; the interaction deacetylates SP1 and regulates its transcriptional activity. Interacts with SP3; the interaction deacetylates SP3 and regulates its transcriptional activity. In vitro, C(18) ceramides increase this interaction and the subsequent SP3 deacetylation and SP3-mediated repression of the TERT promoter. Interacts with SPEN/MINT. Interacts with SPHK2. Interacts with SUV39H1. Interacts with TGIF. Interacts with TGIF2. Interacts with TRAF6. Interacts with TRIM28; the interaction recruits HDAC1 to E2F1 and inhibits its acetylation. Interacts with TSC22D3 isoform 1; this interaction affects HDAC1 activity on MYOG promoter and thus inhibits MYOD1 transcriptional activity. Interacts with UHRF1. Interacts with UHRF2. Interacts with ZBTB7A. Interacts with ZMYND8. Interacts with ZMYND15. Interacts with ZNF431. Interacts with ZNF516; this interaction is enhanced in the presence of PWWP2B. Interacts with ZNF541. Interacts with ZNF638. Interacts with ZNHIT1. Interacts with the non-histone region of MACROH2A1. Identified in a complex with HDAC2, KCTD19, DNTTIP1 and ZNF541. Interacts with VRK1. As to quaternary structure, (Microbial infection) Interacts with SV40 large T antigen. The cofactor is Zn(2+). Sumoylated on Lys-444 and Lys-476; which promotes enzymatic activity. Desumoylated by SENP1. Post-translationally, phosphorylation on Ser-421 and Ser-423 promotes enzymatic activity and interactions with NuRD and SIN3 complexes. Phosphorylated by CDK5. In terms of processing, ubiquitinated by CHFR, leading to its degradation by the proteasome. Ubiquitinated by KCTD11, leading to proteasomal degradation. Ubiquitous, with higher levels in heart, pancreas and testis, and lower levels in kidney and brain.

The protein localises to the nucleus. The catalysed reaction is N(6)-acetyl-L-lysyl-[histone] + H2O = L-lysyl-[histone] + acetate. It catalyses the reaction N(6)-acetyl-L-lysyl-[protein] + H2O = L-lysyl-[protein] + acetate. It carries out the reaction N(6)-(2E)-butenoyl-L-lysyl-[protein] + H2O = (2E)-2-butenoate + L-lysyl-[protein]. The enzyme catalyses N(6)-[(S)-lactoyl]-L-lysyl-[protein] + H2O = (S)-lactate + L-lysyl-[protein]. Inositol tetraphosphate (1D-myo-inositol 1,4,5,6-tetrakisphosphate) may act as an intermolecular glue between HDAC1 and N-Cor repressor complex components. Functionally, histone deacetylase that catalyzes the deacetylation of lysine residues on the N-terminal part of the core histones (H2A, H2B, H3 and H4). Histone deacetylation gives a tag for epigenetic repression and plays an important role in transcriptional regulation, cell cycle progression and developmental events. Histone deacetylases act via the formation of large multiprotein complexes. Acts as a component of the histone deacetylase NuRD complex which participates in the remodeling of chromatin. As part of the SIN3B complex is recruited downstream of the constitutively active genes transcriptional start sites through interaction with histones and mitigates histone acetylation and RNA polymerase II progression within transcribed regions contributing to the regulation of transcription. Also functions as a deacetylase for non-histone targets, such as NR1D2, RELA, SP1, SP3, STAT3 and TSHZ3. Deacetylates SP proteins, SP1 and SP3, and regulates their function. Component of the BRG1-RB1-HDAC1 complex, which negatively regulates the CREST-mediated transcription in resting neurons. Upon calcium stimulation, HDAC1 is released from the complex and CREBBP is recruited, which facilitates transcriptional activation. Deacetylates TSHZ3 and regulates its transcriptional repressor activity. Deacetylates 'Lys-310' in RELA and thereby inhibits the transcriptional activity of NF-kappa-B. Deacetylates NR1D2 and abrogates the effect of KAT5-mediated relieving of NR1D2 transcription repression activity. Component of a RCOR/GFI/KDM1A/HDAC complex that suppresses, via histone deacetylase (HDAC) recruitment, a number of genes implicated in multilineage blood cell development. Involved in CIART-mediated transcriptional repression of the circadian transcriptional activator: CLOCK-BMAL1 heterodimer. Required for the transcriptional repression of circadian target genes, such as PER1, mediated by the large PER complex or CRY1 through histone deacetylation. In addition to protein deacetylase activity, also has protein-lysine deacylase activity: acts as a protein decrotonylase and delactylase by mediating decrotonylation ((2E)-butenoyl) and delactylation (lactoyl) of histones, respectively. The chain is Histone deacetylase 1 from Homo sapiens (Human).